The primary structure comprises 110 residues: Large ribosomal subunit protein uL22 (110 aa).

Belongs to the universal ribosomal protein uL22 family. As to quaternary structure, part of the 50S ribosomal subunit.

This protein binds specifically to 23S rRNA; its binding is stimulated by other ribosomal proteins, e.g. L4, L17, and L20. It is important during the early stages of 50S assembly. It makes multiple contacts with different domains of the 23S rRNA in the assembled 50S subunit and ribosome. In terms of biological role, the globular domain of the protein is located near the polypeptide exit tunnel on the outside of the subunit, while an extended beta-hairpin is found that lines the wall of the exit tunnel in the center of the 70S ribosome. This is Large ribosomal subunit protein uL22 from Nitrosomonas europaea (strain ATCC 19718 / CIP 103999 / KCTC 2705 / NBRC 14298).